The chain runs to 24 residues: M-ectatotoxin-Eb2b (24 aa).

In terms of tissue distribution, expressed by the venom gland.

The protein localises to the secreted. Functionally, antimicrobial peptide active against Gram-negative bacterium E.coli MH1 (MIC=2.5 uM) and P.aeruginosa PAO1 (MIC=10 uM) and against Gram-positive bacterium A.globiformis VKM Ac-1112 (MIC=0.6 uM). This chain is M-ectatotoxin-Eb2b, found in Ectatomma brunneum (Ant).